Reading from the N-terminus, the 297-residue chain is Ribosomal RNA small subunit methyltransferase H (297 aa).

S-adenosyl-L-methionine contacts are provided by residues 35–37, Asp55, Phe82, Asp100, and Gln107; that span reads GGH.

The protein belongs to the methyltransferase superfamily. RsmH family.

The protein resides in the cytoplasm. The catalysed reaction is cytidine(1402) in 16S rRNA + S-adenosyl-L-methionine = N(4)-methylcytidine(1402) in 16S rRNA + S-adenosyl-L-homocysteine + H(+). In terms of biological role, specifically methylates the N4 position of cytidine in position 1402 (C1402) of 16S rRNA. The protein is Ribosomal RNA small subunit methyltransferase H of Chlamydia caviae (strain ATCC VR-813 / DSM 19441 / 03DC25 / GPIC) (Chlamydophila caviae).